Reading from the N-terminus, the 235-residue chain is 7-cyano-7-deazaguanine synthase (235 aa).

12-22 (FSGGQDSTACL) contributes to the ATP binding site. 4 residues coordinate Zn(2+): cysteine 200, cysteine 215, cysteine 218, and cysteine 221.

The protein belongs to the QueC family. It depends on Zn(2+) as a cofactor.

The catalysed reaction is 7-carboxy-7-deazaguanine + NH4(+) + ATP = 7-cyano-7-deazaguanine + ADP + phosphate + H2O + H(+). Its pathway is purine metabolism; 7-cyano-7-deazaguanine biosynthesis. Its function is as follows. Catalyzes the ATP-dependent conversion of 7-carboxy-7-deazaguanine (CDG) to 7-cyano-7-deazaguanine (preQ(0)). This chain is 7-cyano-7-deazaguanine synthase, found in Methylibium petroleiphilum (strain ATCC BAA-1232 / LMG 22953 / PM1).